We begin with the raw amino-acid sequence, 169 residues long: Peptide methionine sulfoxide reductase MsrA (169 aa).

Cysteine 10 is an active-site residue.

It belongs to the MsrA Met sulfoxide reductase family.

The catalysed reaction is L-methionyl-[protein] + [thioredoxin]-disulfide + H2O = L-methionyl-(S)-S-oxide-[protein] + [thioredoxin]-dithiol. The enzyme catalyses [thioredoxin]-disulfide + L-methionine + H2O = L-methionine (S)-S-oxide + [thioredoxin]-dithiol. Functionally, has an important function as a repair enzyme for proteins that have been inactivated by oxidation. Catalyzes the reversible oxidation-reduction of methionine sulfoxide in proteins to methionine. The chain is Peptide methionine sulfoxide reductase MsrA from Streptococcus pyogenes serotype M3 (strain ATCC BAA-595 / MGAS315).